The sequence spans 377 residues: EASQSPQYSFESLPQKICLICGDEASGCHYGVLTCGSCKVFFKRAMEGQHNYLCAGRNDCIVDKIRRKNCPACRLRKCCQAGMVLGGRKFKKFNKVRVMRTLDAVALPQPVGIPNESQALSQRITFSPSQDLQLIPPLINLLMSIEPDMVYAGHDNSKPDTSSSLLTSLNQLGERQLLSVVKWSKSLPGFRNLHIDDQITLIQYSWMSLMVFGLGWRSYKHVSGQMLYFAPDLILNEQRMKESSFYSLCLTMWQIPQEFVKLQVSQEEFLCMKVLLLLNTIPLEGLRSQNQFEEMRSSYIRELIKAIGLRQKGVVPSSQRFYQLTKLLDNLHDLVKQLHLYCLNTFIQSRALSVEFPEMMSEVIAAQLPKILAGMVK.

The tract at residues 1–15 (EASQSPQYSFESLPQ) is modulating, Pro-Rich. The nuclear receptor DNA-binding region spans 16 to 90 (KICLICGDEA…AGMVLGGRKF (75 aa)). 2 NR C4-type zinc fingers span residues 18–38 (CLICGDEASGCHYGVLTCGSC) and 54–78 (CAGRNDCIVDKIRRKNCPACRLRKC). Residue Ser-127 is modified to Phosphoserine. The NR LBD domain maps to 130–364 (QDLQLIPPLI…EFPEMMSEVI (235 aa)). Residues 138–377 (LINLLMSIEP…LPKILAGMVK (240 aa)) are AF2; mediates transcriptional activation.

It belongs to the nuclear hormone receptor family. NR3 subfamily. In terms of assembly, interacts with CUEDC2, SMARD1 and with UNC45A. Interacts with PRMT2. Interacts with NCOA2 and NCOA1. Interacts with KLF9. Interacts with GTF2B. In terms of processing, palmitoylated by ZDHHC7 and ZDHHC21. Palmitoylation is required for plasma membrane targeting and for rapid intracellular signaling via ERK and AKT kinases and cAMP generation.

The protein localises to the nucleus. Functionally, the steroid hormones and their receptors are involved in the regulation of eukaryotic gene expression and affect cellular proliferation and differentiation in target tissues. Transcriptional activator of several progesteron-dependent promoters in a variety of cell types. Involved in activation of SRC-dependent MAPK signaling on hormone stimulation. The chain is Progesterone receptor (PGR) from Ovis aries (Sheep).